A 146-amino-acid polypeptide reads, in one-letter code: Mu-like prophage FluMu G protein 1 (146 aa).

To phage Mu protein G.

This is Mu-like prophage FluMu G protein 1 from Haemophilus influenzae (strain ATCC 51907 / DSM 11121 / KW20 / Rd).